A 203-amino-acid polypeptide reads, in one-letter code: Urease accessory protein UreE (203 aa).

A compositionally biased stretch (basic and acidic residues) spans 170 to 190 (EHHGHSHSRSHDHDHDHDHQH). The disordered stretch occupies residues 170–203 (EHHGHSHSRSHDHDHDHDHQHGPSCSHGHHHGHR).

The protein belongs to the UreE family.

It is found in the cytoplasm. Functionally, involved in urease metallocenter assembly. Binds nickel. Probably functions as a nickel donor during metallocenter assembly. The sequence is that of Urease accessory protein UreE from Burkholderia pseudomallei (strain 1710b).